A 428-amino-acid polypeptide reads, in one-letter code: Trigger factor (428 aa).

In terms of domain architecture, PPIase FKBP-type spans 163 to 248 (KDIVTIDFEG…VKEIKAKELP (86 aa)).

The protein belongs to the FKBP-type PPIase family. Tig subfamily.

Its subcellular location is the cytoplasm. The enzyme catalyses [protein]-peptidylproline (omega=180) = [protein]-peptidylproline (omega=0). Involved in protein export. Acts as a chaperone by maintaining the newly synthesized protein in an open conformation. Functions as a peptidyl-prolyl cis-trans isomerase. In Lachnoclostridium phytofermentans (strain ATCC 700394 / DSM 18823 / ISDg) (Clostridium phytofermentans), this protein is Trigger factor.